Consider the following 331-residue polypeptide: CRISPR-associated endonuclease Cas1 (331 aa).

The Mn(2+) site is built by Glu166, His228, and Asp243.

It belongs to the CRISPR-associated endonuclease Cas1 family. Homodimer, forms a heterotetramer with a Cas2 homodimer. The cofactor is Mg(2+). It depends on Mn(2+) as a cofactor.

Functionally, CRISPR (clustered regularly interspaced short palindromic repeat), is an adaptive immune system that provides protection against mobile genetic elements (viruses, transposable elements and conjugative plasmids). CRISPR clusters contain spacers, sequences complementary to antecedent mobile elements, and target invading nucleic acids. CRISPR clusters are transcribed and processed into CRISPR RNA (crRNA). Acts as a dsDNA endonuclease. Involved in the integration of spacer DNA into the CRISPR cassette. This is CRISPR-associated endonuclease Cas1 from Hyperthermus butylicus (strain DSM 5456 / JCM 9403 / PLM1-5).